The primary structure comprises 265 residues: MKVKSFAKIDLGYSVYKKQKNFTKHDFESIFILVENIYDDIEITKIEKNIDDVHYYNETNEIYVYSRLVHKTLEWIRHTYHIKNHYRINIKKRIPIGAGLGGGSSNAAAIMKYILEFEGIKEINYKDVVNKLGADIPFFLSGYKTAYISDYGSVLEDLTGQFKLNYEVYLMNVNVNTKIVFEKFDDNSWHVIKNNFKTIIKNLKENIVVNIHNDLQEYCFELYPNIKYKYNELLSDGFYTILSGAGSSFIRIKLKNKEDLIINEN.

Lysine 8 is a catalytic residue. ATP is bound at residue 95 to 105 (PIGAGLGGGSS). The active site involves aspartate 135.

The protein belongs to the GHMP kinase family. IspE subfamily.

The enzyme catalyses 4-CDP-2-C-methyl-D-erythritol + ATP = 4-CDP-2-C-methyl-D-erythritol 2-phosphate + ADP + H(+). The protein operates within isoprenoid biosynthesis; isopentenyl diphosphate biosynthesis via DXP pathway; isopentenyl diphosphate from 1-deoxy-D-xylulose 5-phosphate: step 3/6. Catalyzes the phosphorylation of the position 2 hydroxy group of 4-diphosphocytidyl-2C-methyl-D-erythritol. This is 4-diphosphocytidyl-2-C-methyl-D-erythritol kinase from Ureaplasma parvum serovar 3 (strain ATCC 27815 / 27 / NCTC 11736).